Consider the following 68-residue polypeptide: Large ribosomal subunit protein bL32 (68 aa).

The protein belongs to the bacterial ribosomal protein bL32 family.

This Aster yellows witches'-broom phytoplasma (strain AYWB) protein is Large ribosomal subunit protein bL32.